A 22-amino-acid polypeptide reads, in one-letter code: C-type natriuretic peptide (22 aa).

Residues Cys-6 and Cys-22 are joined by a disulfide bond.

The protein belongs to the natriuretic peptide family.

Its subcellular location is the secreted. Hormone which plays a role in endochondral ossification through regulation of cartilaginous growth plate chondrocytes proliferation and differentiation. May also be vasoactive and natriuretic. Specifically binds and stimulates the cGMP production of the NPR2 receptor. Binds the clearance receptor NPR3. This Gallus gallus (Chicken) protein is C-type natriuretic peptide (NPPC).